The sequence spans 231 residues: 7-cyano-7-deazaguanine synthase (231 aa).

8–18 (FSGGQDSTTCL) contacts ATP. Zn(2+)-binding residues include Cys-188, Cys-197, Cys-200, and Cys-203.

Belongs to the QueC family. Zn(2+) serves as cofactor.

The enzyme catalyses 7-carboxy-7-deazaguanine + NH4(+) + ATP = 7-cyano-7-deazaguanine + ADP + phosphate + H2O + H(+). It participates in purine metabolism; 7-cyano-7-deazaguanine biosynthesis. Catalyzes the ATP-dependent conversion of 7-carboxy-7-deazaguanine (CDG) to 7-cyano-7-deazaguanine (preQ(0)). This is 7-cyano-7-deazaguanine synthase from Escherichia coli O157:H7.